Reading from the N-terminus, the 305-residue chain is Cytochrome c biogenesis protein CcsA (305 aa).

Helical transmembrane passes span 11–31 (GLGF…FWAV), 37–57 (TGIV…QLVL), 63–83 (GHFP…ACTL), 96–116 (IVAA…SFAL), 141–161 (VIMV…AVLL), 212–232 (TITV…VWAN), 246–263 (TWAL…HTRL), and 275–295 (VAVV…LLGI).

It belongs to the CcmF/CycK/Ccl1/NrfE/CcsA family. As to quaternary structure, may interact with ccs1.

It localises to the cellular thylakoid membrane. In terms of biological role, required during biogenesis of c-type cytochromes (cytochrome c6 and cytochrome f) at the step of heme attachment. In Parasynechococcus marenigrum (strain WH8102), this protein is Cytochrome c biogenesis protein CcsA.